A 134-amino-acid polypeptide reads, in one-letter code: Replication enhancer protein (134 aa).

It belongs to the geminiviridae replication enhancer protein family. In terms of assembly, homooligomer. Interacts with the replication-associated protein (REP). Interacts with host proliferating cell nuclear antigen (PCNA). Interacts with host retinoblastoma-related protein 1 (RBR1), and may thereby deregulate the host cell cycle. Oligomerization and interaction with PCNA are necessary for optimal replication enhancement.

In terms of biological role, increases viral DNA accumulation. Enhances infectivity and symptom expression. The chain is Replication enhancer protein from Tomato pseudo-curly top virus (TPCTV).